The sequence spans 390 residues: MRALEESYDVVVVGAGPAGSMSSYNASKNGAKTLLIEKAQEIGTPVRCAEAIPRIESFGINPSSEFIRSYIKGAYLVAPNGKKITVKGGKTDGYVVERKIFDKFLAIRSAKEGTKIAVKSRVTGLEKTEEGYNVFVNHLGKEYTVKTKLVIAADGVESTISEYAGLKSKKNHNEVCSCAEYEMTNVKLLDNNMMEFYFGEICPKGYIWLFPKGDTVNVGIGIIEGSKKAIEYLDDFLSNPLLEGRLKNAVPVEFKVGGDPVGGPIKKTFKDNLIVVGDAAGHVSPLTGGGISLAMDCGLIAGEVCAKSISSKNYSEEFLSQYETRWKEKHYKFLMNDLKYKTILQKLNDNELNAIADSIPENLEEVDVGKLAIKIVKKAPSLLKYFKELI.

Positions 18, 37, 48, 49, 51, 98, 122, 278, 290, and 291 each coordinate FAD. A 2,3-bis-O-(geranylgeranyl)-sn-glycerol 1-phospholipid is bound at residue Val-368.

Belongs to the geranylgeranyl reductase family. DGGGPL reductase subfamily. Requires FAD as cofactor.

It catalyses the reaction a 2,3-bis-O-phytanyl-sn-glycerol 1-phospholipid + 8 A = a 2,3-bis-O-(geranylgeranyl)-sn-glycerol 1-phospholipid + 8 AH2. The enzyme catalyses 2,3-bis-O-(phytanyl)-sn-glycerol 1-phosphate + 8 A = 2,3-bis-O-(geranylgeranyl)-sn-glycerol 1-phosphate + 8 AH2. It carries out the reaction CDP-2,3-bis-O-(geranylgeranyl)-sn-glycerol + 8 AH2 = CDP-2,3-bis-O-(phytanyl)-sn-glycerol + 8 A. The catalysed reaction is archaetidylserine + 8 AH2 = 2,3-bis-O-phytanyl-sn-glycero-3-phospho-L-serine + 8 A. Its pathway is membrane lipid metabolism; glycerophospholipid metabolism. Is involved in the reduction of 2,3-digeranylgeranylglycerophospholipids (unsaturated archaeols) into 2,3-diphytanylglycerophospholipids (saturated archaeols) in the biosynthesis of archaeal membrane lipids. Catalyzes the formation of archaetidic acid (2,3-di-O-phytanyl-sn-glyceryl phosphate) from 2,3-di-O-geranylgeranylglyceryl phosphate (DGGGP) via the hydrogenation of each double bond of the isoprenoid chains. Is also probably able to reduce double bonds of geranyl groups in CDP-2,3-bis-O-(geranylgeranyl)-sn-glycerol and archaetidylserine, thus acting at various stages in the biosynthesis of archaeal membrane lipids. This chain is Digeranylgeranylglycerophospholipid reductase, found in Methanococcus vannielii (strain ATCC 35089 / DSM 1224 / JCM 13029 / OCM 148 / SB).